The sequence spans 595 residues: E3 ubiquitin-protein ligase synoviolin B (595 aa).

A helical membrane pass occupies residues 1 to 19 (MTGASLALTASVVAHAYYL). Residues 20-35 (KNQFYPTVVYLTKSSP) lie on the Lumenal side of the membrane. Residues 36–56 (SMAILYIQAFVLVFLLGKFMG) traverse the membrane as a helical segment. Residues 57 to 92 (KVFFGQLRAAEMEHLLERSWYAVTETCLAFTVFRDD) lie on the Cytoplasmic side of the membrane. A helical transmembrane segment spans residues 93–113 (FSPRFVALFTLLLFLKCFHWL). Over 114–129 (AEDRVDFMERSPNISW) the chain is Lumenal. A helical transmembrane segment spans residues 130–150 (LFHFRILALMLLLGVLDAFFV). Topologically, residues 151-163 (SHAYNSLVTRGAS) are cytoplasmic. The helical transmembrane segment at 164–184 (VQLVFGFEYAILMTMILAVFI) threads the bilayer. Over 185-218 (KYILHSVDLQSENPWDNKAVYMLYTELFTGFIKV) the chain is Lumenal. A helical membrane pass occupies residues 219 to 239 (LLYMAFMTIMVKVHTFPLFAI). The interaction with p53/TP53 stretch occupies residues 230-264 (KVHTFPLFAIRPMYLAMRQFKKAVTDAVMSRRAIR). Residues 240–595 (RPMYLAMRQF…LQKLETTDSQ (356 aa)) lie on the Cytoplasmic side of the membrane. Zn(2+) is bound by residues cysteine 285, cysteine 288, cysteine 301, histidine 303, histidine 306, cysteine 309, cysteine 320, and cysteine 323. An RING-type; atypical zinc finger spans residues 285 to 324 (CIICREEMVSGAKRLPCNHIFHTSCLRSWFQRQQTCPTCR). The span at 335–353 (QPQTPAEQQNQHQAQQQPT) shows a compositional bias: low complexity. Disordered regions lie at residues 335–370 (QPQT…LPPF) and 386–426 (PVPG…PGAA). Pro residues predominate over residues 354–370 (PVVPPQPNFPPGMLPPF). Positions 390–408 (APVGNPPDEANPGSSSGSS) are enriched in low complexity. Positions 463 to 494 (EELRAMEGHERQNLEARLQCLQNIHTLLDAAM) form a coiled coil. Positions 509-595 (PPQPPVSSSS…LQKLETTDSQ (87 aa)) are disordered. Low complexity predominate over residues 514-552 (VSSSSSSSASASTEPTTSSVSEPVIDTSSIVTTDSSQQS).

This sequence belongs to the HRD1 family. As to quaternary structure, homodimer.

The protein localises to the endoplasmic reticulum membrane. It carries out the reaction S-ubiquitinyl-[E2 ubiquitin-conjugating enzyme]-L-cysteine + [acceptor protein]-L-lysine = [E2 ubiquitin-conjugating enzyme]-L-cysteine + N(6)-ubiquitinyl-[acceptor protein]-L-lysine.. It participates in protein modification; protein ubiquitination. Its function is as follows. E3 ubiquitin-protein ligase which accepts ubiquitin specifically from endoplasmic reticulum-associated UBC7 E2 ligase and transfers it to substrates, promoting their degradation. Component of the endoplasmic reticulum quality control (ERQC) system also called ER-associated degradation (ERAD) involved in ubiquitin-dependent degradation of misfolded endoplasmic reticulum proteins. Also promotes the degradation of normal but naturally short-lived proteins. Protects cells from ER stress-induced apoptosis. Sequesters p53 in the cytoplasm and promotes its degradation, thereby negatively regulating its biological function in transcription, cell cycle regulation and apoptosis. In Xenopus laevis (African clawed frog), this protein is E3 ubiquitin-protein ligase synoviolin B (syvn1-b).